The sequence spans 176 residues: Urease accessory protein UreE (176 aa).

The disordered stretch occupies residues 134-176 (EAGAYGSGGHHHHGESSQGHAHGPLAPIPVHQKIHRPSDIPSR).

It belongs to the UreE family.

The protein resides in the cytoplasm. Its function is as follows. Involved in urease metallocenter assembly. Binds nickel. Probably functions as a nickel donor during metallocenter assembly. This Nitrosospira multiformis (strain ATCC 25196 / NCIMB 11849 / C 71) protein is Urease accessory protein UreE.